A 127-amino-acid polypeptide reads, in one-letter code: Movement protein TGB2 (127 aa).

Topologically, residues Met-1–Asn-24 are cytoplasmic. A helical transmembrane segment spans residues Thr-25–Thr-45. Over Arg-46–Asn-85 the chain is Lumenal. The chain crosses the membrane as a helical span at residues Leu-86–Leu-106. The Cytoplasmic segment spans residues Ala-107–Thr-127.

It belongs to the Tymovirales TGBp2 protein family.

The protein localises to the host endoplasmic reticulum membrane. In terms of biological role, plays a role in viral cell-to-cell propagation, by facilitating genome transport to neighboring plant cells through plasmosdesmata,. The polypeptide is Movement protein TGB2 (Setaria italica (Foxtail millet)).